The primary structure comprises 350 residues: Protein RecA (350 aa).

65–72 (GPESSGKT) lines the ATP pocket. Positions 326-350 (HNLKTRNTADSKVTGAKDEKSKEEK) are disordered. The segment covering 340 to 350 (GAKDEKSKEEK) has biased composition (basic and acidic residues).

This sequence belongs to the RecA family.

Its subcellular location is the cytoplasm. Its function is as follows. Can catalyze the hydrolysis of ATP in the presence of single-stranded DNA, the ATP-dependent uptake of single-stranded DNA by duplex DNA, and the ATP-dependent hybridization of homologous single-stranded DNAs. It interacts with LexA causing its activation and leading to its autocatalytic cleavage. This is Protein RecA from Clostridium novyi (strain NT).